A 244-amino-acid chain; its full sequence is Agamous-like MADS-box protein MADS2 (244 aa).

An MADS-box domain is found at 1–61 (MGRGRVELKR…GKLYEFCSSS (61 aa)). A K-box domain is found at 88–178 (EQSSYREYLK…TRKLDEISVK (91 aa)).

In terms of tissue distribution, expressed in flowers and seeds.

It is found in the nucleus. In terms of biological role, probable transcription factor involved in flower development. The polypeptide is Agamous-like MADS-box protein MADS2 (Vitis vinifera (Grape)).